We begin with the raw amino-acid sequence, 338 residues long: E3 ubiquitin-protein ligase RING1 (338 aa).

A disordered region spans residues 102–124 (TTTSSSASIDPNNPSLSGPTRSG). A compositionally biased stretch (polar residues) spans 110-121 (IDPNNPSLSGPT). Residues 224-265 (CAVCMDDFEEGTEAKQMPCKHLYHKDCLLPWLELHNSCPVCR) form an RING-type; atypical zinc finger. Basic and acidic residues-rich tracts occupy residues 267–279 (ELPTDDPDYERRV) and 298–309 (SDGDNRTVERSF). The tract at residues 267–338 (ELPTDDPDYE…NAETRQEDLD (72 aa)) is disordered.

In terms of processing, auto-ubiquitinated as part of the enzymatic reaction. In terms of tissue distribution, mostly expressed in cotton fibers, and, to a lower extent, in leaves and flowers.

It catalyses the reaction S-ubiquitinyl-[E2 ubiquitin-conjugating enzyme]-L-cysteine + [acceptor protein]-L-lysine = [E2 ubiquitin-conjugating enzyme]-L-cysteine + N(6)-ubiquitinyl-[acceptor protein]-L-lysine.. It participates in protein modification; protein ubiquitination. In terms of biological role, E3 ubiquitin-protein ligase which accepts ubiquitin from an E2 ubiquitin-conjugating enzyme in the form of a thioester and then directly transfers the ubiquitin to targeted substrates. Promotes polyubiquitination of target proteins. This is E3 ubiquitin-protein ligase RING1 (RING1) from Gossypium hirsutum (Upland cotton).